The sequence spans 326 residues: Zona pellucida-binding protein 2 (326 aa).

A signal peptide spans M1–A20. N-linked (GlcNAc...) asparagine glycosylation is found at N86, N220, and N256.

The protein belongs to the zona pellucida-binding protein Sp38 family. Post-translationally, N-glycosylated.

The protein resides in the secreted. It is found in the cytoplasmic vesicle. The protein localises to the secretory vesicle. Its subcellular location is the acrosome. Is implicated in sperm-oocyte interaction during fertilization. The sequence is that of Zona pellucida-binding protein 2 (Zpbp2) from Rattus norvegicus (Rat).